The primary structure comprises 152 residues: 3-hydroxyacyl-[acyl-carrier-protein] dehydratase FabZ (152 aa).

His54 is a catalytic residue.

This sequence belongs to the thioester dehydratase family. FabZ subfamily.

The protein resides in the cytoplasm. The catalysed reaction is a (3R)-hydroxyacyl-[ACP] = a (2E)-enoyl-[ACP] + H2O. Functionally, involved in unsaturated fatty acids biosynthesis. Catalyzes the dehydration of short chain beta-hydroxyacyl-ACPs and long chain saturated and unsaturated beta-hydroxyacyl-ACPs. In Buchnera aphidicola subsp. Schizaphis graminum (strain Sg), this protein is 3-hydroxyacyl-[acyl-carrier-protein] dehydratase FabZ.